The sequence spans 171 residues: Iron-sulfur cluster assembly protein 1 (171 aa).

A mitochondrion-targeting transit peptide spans 1–55 (MLRAGGRRLLAPGLRRVLGGGAAAPVAVGGAKAYHERVVDHYENPRNVGSFENDD).

Belongs to the NifU family. Component of the core Fe-S cluster (ISC) assembly machinery. [2Fe-2S] cluster is required as a cofactor.

The protein resides in the mitochondrion matrix. It participates in cofactor biosynthesis; iron-sulfur cluster biosynthesis. Scaffold protein for the de novo synthesis of iron-sulfur (Fe-S) clusters within mitochondria, which is required for maturation of both mitochondrial and cytoplasmic [2Fe-2S] and [4Fe-4S] proteins. First, a [2Fe-2S] cluster is transiently assembled on the scaffold protein ISCU (ISU1, ISU2 or ISU3). In a second step, the cluster is released from ISCU, transferred to a glutaredoxin, followed by the formation of mitochondrial [2Fe-2S] proteins, the synthesis of [4Fe-4S] clusters and their target-specific insertion into the recipient apoproteins. Cluster assembly on ISCU depends on the function of the cysteine desulfurase complex NFS1-ISD11, which serves as the sulfur donor for cluster synthesis, the iron-binding protein frataxin as the putative iron donor, and the electron transfer chain comprised of ferredoxin reductase and ferredoxin, which receive their electrons from NADH. In Oryza sativa subsp. japonica (Rice), this protein is Iron-sulfur cluster assembly protein 1.